The following is a 228-amino-acid chain: Urease accessory protein UreF 1 (228 aa).

The protein belongs to the UreF family. In terms of assembly, ureD, UreF and UreG form a complex that acts as a GTP-hydrolysis-dependent molecular chaperone, activating the urease apoprotein by helping to assemble the nickel containing metallocenter of UreC. The UreE protein probably delivers the nickel.

It localises to the cytoplasm. Required for maturation of urease via the functional incorporation of the urease nickel metallocenter. The chain is Urease accessory protein UreF 1 from Brucella anthropi (strain ATCC 49188 / DSM 6882 / CCUG 24695 / JCM 21032 / LMG 3331 / NBRC 15819 / NCTC 12168 / Alc 37) (Ochrobactrum anthropi).